The chain runs to 260 residues: Imidazole glycerol phosphate synthase subunit HisF (260 aa).

Active-site residues include Asp-11 and Asp-130.

Belongs to the HisA/HisF family. In terms of assembly, heterodimer of HisH and HisF.

The protein resides in the cytoplasm. It carries out the reaction 5-[(5-phospho-1-deoxy-D-ribulos-1-ylimino)methylamino]-1-(5-phospho-beta-D-ribosyl)imidazole-4-carboxamide + L-glutamine = D-erythro-1-(imidazol-4-yl)glycerol 3-phosphate + 5-amino-1-(5-phospho-beta-D-ribosyl)imidazole-4-carboxamide + L-glutamate + H(+). It functions in the pathway amino-acid biosynthesis; L-histidine biosynthesis; L-histidine from 5-phospho-alpha-D-ribose 1-diphosphate: step 5/9. Its function is as follows. IGPS catalyzes the conversion of PRFAR and glutamine to IGP, AICAR and glutamate. The HisF subunit catalyzes the cyclization activity that produces IGP and AICAR from PRFAR using the ammonia provided by the HisH subunit. This chain is Imidazole glycerol phosphate synthase subunit HisF, found in Psychrobacter arcticus (strain DSM 17307 / VKM B-2377 / 273-4).